Reading from the N-terminus, the 229-residue chain is uncharacterized protein (229 aa).

The PilZ domain occupies 102–217 (RRRTVRVEPD…REKVRRYVFE (116 aa)).

The protein to A.aeolicus aq_820 and aq_1211.

This is an uncharacterized protein from Aquifex aeolicus (strain VF5).